The chain runs to 190 residues: NADH-quinone oxidoreductase subunit B (190 aa).

[4Fe-4S] cluster is bound by residues cysteine 67, cysteine 68, cysteine 132, and cysteine 162.

It belongs to the complex I 20 kDa subunit family. NDH-1 is composed of 14 different subunits. Subunits NuoB, C, D, E, F, and G constitute the peripheral sector of the complex. Requires [4Fe-4S] cluster as cofactor.

It is found in the cell inner membrane. It carries out the reaction a quinone + NADH + 5 H(+)(in) = a quinol + NAD(+) + 4 H(+)(out). In terms of biological role, NDH-1 shuttles electrons from NADH, via FMN and iron-sulfur (Fe-S) centers, to quinones in the respiratory chain. The immediate electron acceptor for the enzyme in this species is believed to be ubiquinone. Couples the redox reaction to proton translocation (for every two electrons transferred, four hydrogen ions are translocated across the cytoplasmic membrane), and thus conserves the redox energy in a proton gradient. This is NADH-quinone oxidoreductase subunit B from Anaplasma marginale (strain Florida).